Reading from the N-terminus, the 176-residue chain is Isopentenyl-diphosphate Delta-isomerase (176 aa).

Mn(2+) is bound by residues histidine 23 and histidine 29. In terms of domain architecture, Nudix hydrolase spans 27-161; sequence LRHLAISVFV…PERFTPWLKI (135 aa). Cysteine 63 is a catalytic residue. A Mg(2+)-binding site is contributed by cysteine 63. Position 65 (histidine 65) interacts with Mn(2+). Glutamate 83 provides a ligand contact to Mg(2+). The Mn(2+) site is built by glutamate 109 and glutamate 111. Glutamate 111 is an active-site residue.

The protein belongs to the IPP isomerase type 1 family. Mg(2+) is required as a cofactor. The cofactor is Mn(2+).

It localises to the cytoplasm. The catalysed reaction is isopentenyl diphosphate = dimethylallyl diphosphate. It functions in the pathway isoprenoid biosynthesis; dimethylallyl diphosphate biosynthesis; dimethylallyl diphosphate from isopentenyl diphosphate: step 1/1. It participates in porphyrin-containing compound metabolism; chlorophyll biosynthesis. Catalyzes the 1,3-allylic rearrangement of the homoallylic substrate isopentenyl (IPP) to its highly electrophilic allylic isomer, dimethylallyl diphosphate (DMAPP). This Rhodobacter capsulatus (strain ATCC BAA-309 / NBRC 16581 / SB1003) protein is Isopentenyl-diphosphate Delta-isomerase.